Here is a 145-residue protein sequence, read N- to C-terminus: Ribonuclease VapC48 (145 aa).

Asp-6 and Asp-109 together coordinate Mg(2+). The PINc domain maps to 15 to 141 (HRASPFHDKA…RKFEGIRIRD (127 aa)).

This sequence belongs to the PINc/VapC protein family. Requires Mg(2+) as cofactor.

In terms of biological role, toxic component of a type II toxin-antitoxin (TA) system. An RNase. Its cognate antitoxin is VapB48. The chain is Ribonuclease VapC48 from Mycobacterium tuberculosis (strain CDC 1551 / Oshkosh).